We begin with the raw amino-acid sequence, 261 residues long: uncharacterized protein (261 aa).

The signal sequence occupies residues 1 to 22; the sequence is MGYLKKVGMCISLLIVIIFVTS. The N-palmitoyl cysteine moiety is linked to residue Cys-23. Cys-23 is lipidated: S-diacylglycerol cysteine.

This sequence belongs to the staphylococcal tandem lipoprotein family.

Its subcellular location is the cell membrane. This is an uncharacterized protein from Staphylococcus aureus (strain bovine RF122 / ET3-1).